Reading from the N-terminus, the 351-residue chain is uncharacterized protein (351 aa).

This is an uncharacterized protein from Gallus gallus (Chicken).